Here is a 376-residue protein sequence, read N- to C-terminus: N-acetyldiaminopimelate deacetylase (376 aa).

Asp-69 is an active-site residue. The active-site Proton acceptor is Glu-128.

Belongs to the peptidase M20A family. N-acetyldiaminopimelate deacetylase subfamily.

It catalyses the reaction N-acetyl-(2S,6S)-2,6-diaminopimelate + H2O = (2S,6S)-2,6-diaminopimelate + acetate. The protein operates within amino-acid biosynthesis; L-lysine biosynthesis via DAP pathway; LL-2,6-diaminopimelate from (S)-tetrahydrodipicolinate (acetylase route): step 3/3. Catalyzes the conversion of N-acetyl-diaminopimelate to diaminopimelate and acetate. The polypeptide is N-acetyldiaminopimelate deacetylase (Streptococcus pneumoniae (strain CGSP14)).